The primary structure comprises 711 residues: DNA topoisomerase 3 (711 aa).

The region spanning 2-135 (KSLILAEKPS…IRRLWISSVT (134 aa)) is the Toprim domain. Positions 8 and 104 each coordinate Mg(2+). Residues 152 to 580 (YNDLYYAALA…EMKDFTKDVV (429 aa)) enclose the Topo IA-type catalytic domain. The tract at residues 186 to 191 (SLGRVQ) is interaction with DNA. Tyrosine 305 acts as the O-(5'-phospho-DNA)-tyrosine intermediate in catalysis. The tract at residues 691–711 (MNKNEGLDNNPFKDALKNLNL) is disordered.

Belongs to the type IA topoisomerase family. Mg(2+) is required as a cofactor.

It carries out the reaction ATP-independent breakage of single-stranded DNA, followed by passage and rejoining.. Its function is as follows. Releases the supercoiling and torsional tension of DNA, which is introduced during the DNA replication and transcription, by transiently cleaving and rejoining one strand of the DNA duplex. Introduces a single-strand break via transesterification at a target site in duplex DNA. The scissile phosphodiester is attacked by the catalytic tyrosine of the enzyme, resulting in the formation of a DNA-(5'-phosphotyrosyl)-enzyme intermediate and the expulsion of a 3'-OH DNA strand. The free DNA strand then undergoes passage around the unbroken strand, thus removing DNA supercoils. Finally, in the religation step, the DNA 3'-OH attacks the covalent intermediate to expel the active-site tyrosine and restore the DNA phosphodiester backbone. The chain is DNA topoisomerase 3 from Staphylococcus aureus (strain NCTC 8325 / PS 47).